A 353-amino-acid polypeptide reads, in one-letter code: O-antigen biosynthesis glycosyltransferase WclY (353 aa).

Residues 116–136 (SLIGGLLWCSIWLFFDKLVIL) form a helical membrane-spanning segment. The UDP site is built by Asn190 and Glu271. The E(x7)E motif lies at 263 to 271 (EGFGLTVLE).

It belongs to the glycosyltransferase group 1 family. Glycosyltransferase 4 subfamily.

It is found in the membrane. It functions in the pathway bacterial outer membrane biogenesis; LPS O-antigen biosynthesis. With respect to regulation, activated by 5mM MnCl(2) and MgCl(2). No significant effect on activity by 5 mM ethylenediaminetetraacetic acid (EDTA), 0.125-0.5% Triton X-100 or dithiothreitol (DTT). Inhibited by 5 mM Zn-acetate. Functionally, involved in the assembly of the O-repeating unit during O-antigen biosynthesis. Glucosyltransferase accountable for the alpha-D-Glc-1,4-beta-D-Gal linkage within the O-antigen. Transfers alpha-1,4-Glc to the Gal moiety of a specific Gal-beta1-3GalNAc-alpha-OPO3-PO3-phenoxyundecyl (Gal-beta1-3GalNAc-PP-PhU) synthetic natural acceptor substrate analog. Requires both Gal-beta1-3GalNAc-alpha and the diphosphate moiety in the acceptor. Not active with GalNAc-PP-PhU, GlcNAc-PP-PhU, Gal-beta1-3GalNAc-alpha-O-benzyl, D-Rha-alpha1-3GlcNAc-alpha-PP-PhU or D-Man-alpha1-3Man-alpha-5-benzamidopentyl (BAP), nor with glycopeptides TTTVTP (Gal-beta1-3GalNAc-alpha-)TPTG or TT (Gal-beta1-3GalNAc-alpha-)TVTPTPTG as acceptor substrates. Has a broad nucleotide sugar donor substrate specificity with ADP-Glc, TDP-Glc and UDP-Glc as superior donors. Gal, GlcNAc, and GalNAc residues are transferred from UDP-sugars, but with low activity. UDP-Xyl, UDP-GlcA, GDP-Fuc or GDP-K-Rha do not act as donors. The polypeptide is O-antigen biosynthesis glycosyltransferase WclY (Escherichia coli).